A 312-amino-acid polypeptide reads, in one-letter code: Protoheme IX farnesyltransferase 2 (312 aa).

A run of 8 helical transmembrane segments spans residues V31–H51, P52–L72, A119–I139, I152–G172, L179–F199, I225–F245, W247–V267, and L283–V303.

The protein belongs to the UbiA prenyltransferase family. Protoheme IX farnesyltransferase subfamily.

It is found in the cell inner membrane. It carries out the reaction heme b + (2E,6E)-farnesyl diphosphate + H2O = Fe(II)-heme o + diphosphate. The protein operates within porphyrin-containing compound metabolism; heme O biosynthesis; heme O from protoheme: step 1/1. Its function is as follows. Converts heme B (protoheme IX) to heme O by substitution of the vinyl group on carbon 2 of heme B porphyrin ring with a hydroxyethyl farnesyl side group. This is Protoheme IX farnesyltransferase 2 from Nitrobacter winogradskyi (strain ATCC 25391 / DSM 10237 / CIP 104748 / NCIMB 11846 / Nb-255).